The chain runs to 109 residues: Nucleoid-associated protein MS1507 (109 aa).

Residues 1–21 form a disordered region; the sequence is MFGKGGLGNLMKQAQQMQERM.

It belongs to the YbaB/EbfC family. In terms of assembly, homodimer.

The protein localises to the cytoplasm. It localises to the nucleoid. In terms of biological role, binds to DNA and alters its conformation. May be involved in regulation of gene expression, nucleoid organization and DNA protection. The chain is Nucleoid-associated protein MS1507 from Mannheimia succiniciproducens (strain KCTC 0769BP / MBEL55E).